A 332-amino-acid chain; its full sequence is 2,3-diketo-L-gulonate reductase (332 aa).

H44 acts as the Proton donor in catalysis. Residues 168 to 174 (ITMVDMS), 224 to 225 (WK), and 304 to 306 (GHE) contribute to the NAD(+) site.

The protein belongs to the LDH2/MDH2 oxidoreductase family. DlgD subfamily. As to quaternary structure, homodimer.

The protein localises to the cytoplasm. The catalysed reaction is 3-dehydro-L-gulonate + NAD(+) = 2,3-dioxo-L-gulonate + NADH + H(+). It carries out the reaction 3-dehydro-L-gulonate + NADP(+) = 2,3-dioxo-L-gulonate + NADPH + H(+). Its function is as follows. Catalyzes the reduction of 2,3-diketo-L-gulonate in the presence of NADH, to form 3-keto-L-gulonate. The chain is 2,3-diketo-L-gulonate reductase from Escherichia coli (strain SMS-3-5 / SECEC).